The chain runs to 445 residues: MREIVHIQAGQCGNQIGAKFWEVISDEHGIDPTGTYHGDSDLQLERINVYYNEASGGKYVPRAILVDLEPGTMDSVRAGPFGQIFRPDNFVFGQSGAGNNWAKGHYTEGAELVDSVLDVIRKEAESCDCLQGFQLTHSLGGGTGSGMGTLLISKIREEYPDRIMVTYSVVPSPKVSDTVVEPYNATLSVHQLVENTDETYCIDNEALYDICFRTLKLSNPTYGDLNHLVSATMSGVTTCLRFPGQLNADLRKLAVNMVPFPRLHFFMPGFAPLTSRGSQQYRALSVPELTQQMFDAKNMMAACDPRHGRYLTVAAIFRGRMSMKEVDEQMLNVQNKNSSYFVEWIPNNVKTAVCDIPPRGLKMSATFVGNSTAIQELFRRVSEQFTAMFRRKAFLHWYTGEGMDEMEFTEAESNMNDLVSEYQQYQDATAEDEGEFDEDEEVEEA.

8 residues coordinate GTP: Gln11, Glu69, Ser138, Gly142, Thr143, Gly144, Asn204, and Asn226. Glu69 contributes to the Mg(2+) binding site. Positions 424–445 (QYQDATAEDEGEFDEDEEVEEA) are disordered. Over residues 429–445 (TAEDEGEFDEDEEVEEA) the composition is skewed to acidic residues.

This sequence belongs to the tubulin family. In terms of assembly, dimer of alpha and beta chains. A typical microtubule is a hollow water-filled tube with an outer diameter of 25 nm and an inner diameter of 15 nM. Alpha-beta heterodimers associate head-to-tail to form protofilaments running lengthwise along the microtubule wall with the beta-tubulin subunit facing the microtubule plus end conferring a structural polarity. Microtubules usually have 13 protofilaments but different protofilament numbers can be found in some organisms and specialized cells. It depends on Mg(2+) as a cofactor.

It localises to the cytoplasm. It is found in the cytoskeleton. Tubulin is the major constituent of microtubules, a cylinder consisting of laterally associated linear protofilaments composed of alpha- and beta-tubulin heterodimers. Microtubules grow by the addition of GTP-tubulin dimers to the microtubule end, where a stabilizing cap forms. Below the cap, tubulin dimers are in GDP-bound state, owing to GTPase activity of alpha-tubulin. This chain is Tubulin beta-2 chain (TUB-2), found in Echinococcus multilocularis (Fox tapeworm).